We begin with the raw amino-acid sequence, 96 residues long: Protein RnfH (96 aa).

It belongs to the UPF0125 (RnfH) family.

In Escherichia fergusonii (strain ATCC 35469 / DSM 13698 / CCUG 18766 / IAM 14443 / JCM 21226 / LMG 7866 / NBRC 102419 / NCTC 12128 / CDC 0568-73), this protein is Protein RnfH.